We begin with the raw amino-acid sequence, 190 residues long: Threonylcarbamoyl-AMP synthase (190 aa).

The 183-residue stretch at 8–190 folds into the YrdC-like domain; it reads RFRIRQCAAR…DAESGAVIRA (183 aa).

Belongs to the SUA5 family. TsaC subfamily.

The protein resides in the cytoplasm. It carries out the reaction L-threonine + hydrogencarbonate + ATP = L-threonylcarbamoyladenylate + diphosphate + H2O. In terms of biological role, required for the formation of a threonylcarbamoyl group on adenosine at position 37 (t(6)A37) in tRNAs that read codons beginning with adenine. Catalyzes the conversion of L-threonine, HCO(3)(-)/CO(2) and ATP to give threonylcarbamoyl-AMP (TC-AMP) as the acyladenylate intermediate, with the release of diphosphate. The sequence is that of Threonylcarbamoyl-AMP synthase from Alkalilimnicola ehrlichii (strain ATCC BAA-1101 / DSM 17681 / MLHE-1).